Here is a 108-residue protein sequence, read N- to C-terminus: Malonate decarboxylase acyl carrier protein (108 aa).

An O-(phosphoribosyl dephospho-coenzyme A)serine modification is found at serine 35.

It belongs to the MdcC family. In terms of processing, covalently binds the prosthetic group of malonate decarboxylase.

The protein localises to the cytoplasm. In terms of biological role, subunit of malonate decarboxylase, it is an acyl carrier protein to which acetyl and malonyl thioester residues are bound via a 2'-(5''-phosphoribosyl)-3'-dephospho-CoA prosthetic group and turn over during the catalytic mechanism. This chain is Malonate decarboxylase acyl carrier protein, found in Burkholderia cepacia (Pseudomonas cepacia).